The chain runs to 133 residues: Large ribosomal subunit protein bL19 (133 aa).

This sequence belongs to the bacterial ribosomal protein bL19 family.

In terms of biological role, this protein is located at the 30S-50S ribosomal subunit interface and may play a role in the structure and function of the aminoacyl-tRNA binding site. The polypeptide is Large ribosomal subunit protein bL19 (Stenotrophomonas maltophilia (strain K279a)).